A 160-amino-acid chain; its full sequence is Transcriptional repressor NrdR (160 aa).

Over residues 1 to 11 (MRCPNCNSLDT) the composition is skewed to polar residues. Residues 1 to 20 (MRCPNCNSLDTQVKDSRPTE) are disordered. A zinc finger spans residues 3 to 34 (CPNCNSLDTQVKDSRPTEDSSVIRRRRVCIAC). The 91-residue stretch at 49-139 (LTVIKRNGRR…VYRNFREAKD (91 aa)) folds into the ATP-cone domain.

This sequence belongs to the NrdR family. Requires Zn(2+) as cofactor.

In terms of biological role, negatively regulates transcription of bacterial ribonucleotide reductase nrd genes and operons by binding to NrdR-boxes. In Rhodopseudomonas palustris (strain HaA2), this protein is Transcriptional repressor NrdR.